A 1203-amino-acid chain; its full sequence is MIDVNNFEYMKIGLASPDKIRSWSYGEVKKPETINYRTLKPEKDGLFCERIFGPQKDWECHCGKYKRVRYKGVVCDRCGVEVTRAKVRRERMGHIELAAPVSHIWYFKGIPSRMGLVLDMSPRALEEVIYFASYVVTESGDTPLDKKQLLSEKEYRAYRDRYGSTFQAAMGAEAIKKLLQDIDLDKEVDFLKEELKTAQGQRRTRAIKRLEVLEAFRNSGNEPSWMILDVLPVIPPELRPMVQLDGGRFATSDLNDLYRRVINRNNRLKRLLDLGAPSIIVQNEKRMLQEAVDALIDNGRRGRPVTGPGNRPLKSLSHMLKGKQGRFRQNLLGKRVDYSGRSVIVVGPNLKMYQCGLPKEMALELFKPFVMKELVEKGLAHNIKSAKRKIERVQPEVWDVLESVIKEHPVLLNRAPTLHRLGIQAFEPTLVEGRAIRLHPLVCTAYNADFDGDQMAVHVPLSSEAQAEARLLMLAAQNILNPKDGKPVVTPSQDMVLGNYYLTLEREGAIGEGMVFKDANEALLAYQNGYVHLHTRVAVAASAVNNATFTEEQKSMLLLTTVGKLIFNEILPESFPYINEPTNSNLEKETPAKYFVEKGANIKEIIASREEVAPFSKKILGNIIAEVFKRFQITETSRMLDRMKNLGFKYSTKAGITVGVSDILVLGEKDEILHEAQAKVDNVIKQFRRGLITEEERYDRVISIWSNAKDVIQGKLMKSLNKRNPIFMMSDSGARGNASNFTQLAGMRGLMANPSGRIIELPIKSSFREGLTVLEYFISTHGARKGLADTALKTADSGYLTRRLVDVAQDVIVREDDCGTDRGLLIGAIKEGNEVIESLYDRLVGRFARKTVKHPETGEVLVAENQLITEDIAHIVENSGVETVNIRSAFTCNTRHGVCKKCYGRNLATGTDVEVGEAVGIIAAQSIGEPGTQLTMRTFHTGGVAGDDITQGLPRIQEIFEARNPKGQAVISEIDGVIAAINDVKDRQEVVVQGEVEARTYAIPYGARLKVTPGQPISHGKELTEGSIDPKELLKVTDITAVQEYLLREVQKVYRMQGVEIGDKHVEVMVRQMLRKVRVSDAGETDVLPGTLLDIHQFTDANAKVLLQGKQPATARPVLLGITKASLETDSFLSAASFQETTRVLTDAAIKGKRDELLGLKENVIIGKLVPAGTGMNRYRKVDLVKTTQDDMNVENDEVYVEQ.

Residues cysteine 60, cysteine 62, cysteine 75, and cysteine 78 each contribute to the Zn(2+) site. Mg(2+) is bound by residues aspartate 449, aspartate 451, and aspartate 453. 4 residues coordinate Zn(2+): cysteine 818, cysteine 892, cysteine 899, and cysteine 902.

Belongs to the RNA polymerase beta' chain family. As to quaternary structure, the RNAP catalytic core consists of 2 alpha, 1 beta, 1 beta' and 1 omega subunit. When a sigma factor is associated with the core the holoenzyme is formed, which can initiate transcription. Mg(2+) serves as cofactor. Zn(2+) is required as a cofactor.

The enzyme catalyses RNA(n) + a ribonucleoside 5'-triphosphate = RNA(n+1) + diphosphate. In terms of biological role, DNA-dependent RNA polymerase catalyzes the transcription of DNA into RNA using the four ribonucleoside triphosphates as substrates. The chain is DNA-directed RNA polymerase subunit beta' from Bacillus cereus (strain ATCC 14579 / DSM 31 / CCUG 7414 / JCM 2152 / NBRC 15305 / NCIMB 9373 / NCTC 2599 / NRRL B-3711).